The following is a 119-amino-acid chain: DNA-directed RNA polymerase subunit omega (119 aa).

This sequence belongs to the RNA polymerase subunit omega family. The RNAP catalytic core consists of 2 alpha, 1 beta, 1 beta' and 1 omega subunit. When a sigma factor is associated with the core the holoenzyme is formed, which can initiate transcription.

It catalyses the reaction RNA(n) + a ribonucleoside 5'-triphosphate = RNA(n+1) + diphosphate. Promotes RNA polymerase assembly. Latches the N- and C-terminal regions of the beta' subunit thereby facilitating its interaction with the beta and alpha subunits. The protein is DNA-directed RNA polymerase subunit omega (rpoZ) of Caulobacter vibrioides (strain ATCC 19089 / CIP 103742 / CB 15) (Caulobacter crescentus).